A 262-amino-acid polypeptide reads, in one-letter code: MAARRIADEPAYVLHSYDWSDSSLILETFTRHYGRVALVAKGAKKPTSNFRPVLLPLQPLRVTYTLGGEGHGEIHALKGAEWAGGHVMPTGDALLSGLYLNELLLRLLAREDTHAPLFDTYAGVVRVLATVDHEGEHGDALEPVLRSFELLLLREIGLLPGLDAETSTLAPLHAAARYALVPEAGLRPALSADRAALSGGQWLALQGALDEPARYTATLRAIATAEAPVAADLKTQLRALLQYHCGSPLLRTRQLMMDLQKL.

Belongs to the RecO family.

Involved in DNA repair and RecF pathway recombination. This chain is DNA repair protein RecO, found in Acidovorax ebreus (strain TPSY) (Diaphorobacter sp. (strain TPSY)).